The primary structure comprises 179 residues: Large ribosomal subunit protein uL5 (179 aa).

The protein belongs to the universal ribosomal protein uL5 family. In terms of assembly, part of the 50S ribosomal subunit; part of the 5S rRNA/L5/L18/L25 subcomplex. Contacts the 5S rRNA and the P site tRNA. Forms a bridge to the 30S subunit in the 70S ribosome.

Its function is as follows. This is one of the proteins that bind and probably mediate the attachment of the 5S RNA into the large ribosomal subunit, where it forms part of the central protuberance. In the 70S ribosome it contacts protein S13 of the 30S subunit (bridge B1b), connecting the 2 subunits; this bridge is implicated in subunit movement. Contacts the P site tRNA; the 5S rRNA and some of its associated proteins might help stabilize positioning of ribosome-bound tRNAs. This is Large ribosomal subunit protein uL5 from Thiobacillus denitrificans (strain ATCC 25259 / T1).